Here is a 430-residue protein sequence, read N- to C-terminus: GTPase Obg (430 aa).

The region spanning 1–158 is the Obg domain; that stretch reads MFVDQVKINV…IELQLELKVL (158 aa). Residues 122–143 are disordered; sequence GGRGNMRFASPRNPAPEISENG. Positions 159–334 constitute an OBG-type G domain; that stretch reads ADVGLLGFPS…LVARTADVLE (176 aa). GTP is bound by residues 165-172, 190-194, 212-215, 282-285, and 315-317; these read GFPSVGKS, FTTLV, DIPG, TKMD, and SSI. S172 and T192 together coordinate Mg(2+). The OCT domain maps to 353–430; that stretch reads YEFSSEKDFT…ILDFVFEFVE (78 aa).

It belongs to the TRAFAC class OBG-HflX-like GTPase superfamily. OBG GTPase family. As to quaternary structure, monomer. It depends on Mg(2+) as a cofactor.

Its subcellular location is the cytoplasm. Its function is as follows. An essential GTPase which binds GTP, GDP and possibly (p)ppGpp with moderate affinity, with high nucleotide exchange rates and a fairly low GTP hydrolysis rate. Plays a role in control of the cell cycle, stress response, ribosome biogenesis and in those bacteria that undergo differentiation, in morphogenesis control. The sequence is that of GTPase Obg from Pediococcus pentosaceus (strain ATCC 25745 / CCUG 21536 / LMG 10740 / 183-1w).